A 324-amino-acid chain; its full sequence is tRNA dimethylallyltransferase (324 aa).

Residue 17 to 24 (GPTASGKT) participates in ATP binding. Residue 19 to 24 (TASGKT) coordinates substrate. Interaction with substrate tRNA regions lie at residues 42 to 45 (DSAL), 166 to 170 (QRIQR), and 251 to 256 (RCVGYR).

This sequence belongs to the IPP transferase family. In terms of assembly, monomer. The cofactor is Mg(2+).

It catalyses the reaction adenosine(37) in tRNA + dimethylallyl diphosphate = N(6)-dimethylallyladenosine(37) in tRNA + diphosphate. Catalyzes the transfer of a dimethylallyl group onto the adenine at position 37 in tRNAs that read codons beginning with uridine, leading to the formation of N6-(dimethylallyl)adenosine (i(6)A). The protein is tRNA dimethylallyltransferase of Burkholderia mallei (strain NCTC 10247).